The primary structure comprises 347 residues: Haptoglobin (347 aa).

A signal peptide spans 1–18 (MRALGAVITLLLWGQLFA). A Sushi domain is found at 31–88 (DSCPKPPEIANGYVEHLVRYQCKNYYRLRTEGDGVYALNSEKQWVNKAVGEQLPECEA). 2 disulfide bridges follow: C52–C86 and C90–C207. Positions 103-345 (IIGGSLDAKG…ILDWIQKTIA (243 aa)) constitute a Peptidase S1 domain. N-linked (GlcNAc...) asparagine glycans are attached at residues N148, N152, N182, N230, and N256. Intrachain disulfides connect C250-C281 and C292-C322. An interaction with CD163 region spans residues 259–264 (VPENKI).

Belongs to the peptidase S1 family. In terms of assembly, tetramer of two alpha and two beta chains; disulfide-linked. The hemoglobin/haptoglobin complex is composed of a haptoglobin dimer bound to two hemoglobin alpha-beta dimers. Interacts with CD163. Interacts with ERGIC3. In terms of tissue distribution, expressed by the liver and secreted in plasma.

The protein resides in the secreted. In terms of biological role, as a result of hemolysis, hemoglobin is found to accumulate in the kidney and is secreted in the urine. Haptoglobin captures, and combines with free plasma hemoglobin to allow hepatic recycling of heme iron and to prevent kidney damage. Haptoglobin also acts as an antioxidant, has antibacterial activity and plays a role in modulating many aspects of the acute phase response. Hemoglobin/haptoglobin complexes are rapidly cleared by the macrophage CD163 scavenger receptor expressed on the surface of liver Kupfer cells through an endocytic lysosomal degradation pathway. The sequence is that of Haptoglobin (HP) from Oryctolagus cuniculus (Rabbit).